Consider the following 720-residue polypeptide: Translation initiation factor IF-2 (720 aa).

The interval 48–138 is disordered; sequence KKFKASQAKD…NEVEETKEMP (91 aa). Low complexity-rich tracts occupy residues 60–75 and 99–113; these read KQNT…NKQN and KGKQ…NKNQ. The segment covering 114–123 has biased composition (basic residues); the sequence is KNNKNKKNNK. The 170-residue stretch at 222-391 folds into the tr-type G domain; the sequence is ERPAVVTIMG…GLVAEVQELK (170 aa). The interval 231-238 is G1; the sequence is GHVDHGKT. 231–238 is a GTP binding site; it reads GHVDHGKT. A G2 region spans residues 256-260; that stretch reads GITQH. A G3 region spans residues 277 to 280; it reads DTPG. GTP contacts are provided by residues 277–281 and 331–334; these read DTPGH and NKID. Positions 331–334 are G4; it reads NKID. A G5 region spans residues 367–369; the sequence is SAL.

Belongs to the TRAFAC class translation factor GTPase superfamily. Classic translation factor GTPase family. IF-2 subfamily.

The protein resides in the cytoplasm. In terms of biological role, one of the essential components for the initiation of protein synthesis. Protects formylmethionyl-tRNA from spontaneous hydrolysis and promotes its binding to the 30S ribosomal subunits. Also involved in the hydrolysis of GTP during the formation of the 70S ribosomal complex. This is Translation initiation factor IF-2 from Staphylococcus epidermidis (strain ATCC 35984 / DSM 28319 / BCRC 17069 / CCUG 31568 / BM 3577 / RP62A).